Consider the following 132-residue polypeptide: Agouti-signaling protein (132 aa).

The N-terminal stretch at 1–22 (MDVTRLLLATLLVFLCFFTAYS) is a signal peptide. N-linked (GlcNAc...) asparagine glycosylation is present at N39. A disordered region spans residues 61-87 (QISRKEAEKKRSSKKEASMKKVARPRT). The span at 63–79 (SRKEAEKKRSSKKEASM) shows a compositional bias: basic and acidic residues. Intrachain disulfides connect C93-C108, C100-C114, C107-C125, C111-C132, and C116-C123. An Agouti domain is found at 93 to 132 (CVTTRDSCKPPAPACCDPCASCQCRFFRSACSCRVLSLNC).

The protein resides in the secreted. In terms of biological role, involved in the regulation of melanogenesis. The binding of ASP to MC1R precludes alpha-MSH initiated signaling and thus blocks production of cAMP, leading to a down-regulation of eumelanogenesis (brown/black pigment) and thus increasing synthesis of pheomelanin (yellow/red pigment). This is Agouti-signaling protein (ASIP) from Macaca silenus (Lion-tailed macaque).